We begin with the raw amino-acid sequence, 215 residues long: MKLVFLGPPGSGKGTIAKILSNELNYYHISTGDLFRTNIENDTPLGKEIKQIVENGQLVPDSITIKVVEDKINTIDNRDNFILDGFPRNINQAIELDRLLENIKIINFLINEKLLVKRLSGRRICQSCCKIFNIYTLPTKEKEICDFCQGILYQRKDDTKESLKIRLQEYNLQTKPLINFYSNSNRLNNIDASKNINEVQKNLMEIISKIEKKLV.

10-15 (GSGKGT) provides a ligand contact to ATP. Residues 30–59 (STGDLFRTNIENDTPLGKEIKQIVENGQLV) form an NMP region. AMP-binding positions include T31, R36, 57 to 59 (QLV), 85 to 88 (GFPR), and Q92. Residues 121–158 (GRRICQSCCKIFNIYTLPTKEKEICDFCQGILYQRKDD) form an LID region. ATP is bound at residue R122. Zn(2+) contacts are provided by C125 and C128. 131–132 (IF) contacts ATP. Positions 145 and 148 each coordinate Zn(2+). 2 residues coordinate AMP: R155 and R166. K194 provides a ligand contact to ATP.

Belongs to the adenylate kinase family. As to quaternary structure, monomer.

Its subcellular location is the cytoplasm. The catalysed reaction is AMP + ATP = 2 ADP. It participates in purine metabolism; AMP biosynthesis via salvage pathway; AMP from ADP: step 1/1. Catalyzes the reversible transfer of the terminal phosphate group between ATP and AMP. Plays an important role in cellular energy homeostasis and in adenine nucleotide metabolism. The protein is Adenylate kinase of Borrelia recurrentis (strain A1).